A 445-amino-acid polypeptide reads, in one-letter code: Phosphoglucosamine mutase (445 aa).

Ser104 serves as the catalytic Phosphoserine intermediate. The Mg(2+) site is built by Ser104, Asp243, Asp245, and Asp247. Residue Ser104 is modified to Phosphoserine.

It belongs to the phosphohexose mutase family. Requires Mg(2+) as cofactor. Post-translationally, activated by phosphorylation.

It carries out the reaction alpha-D-glucosamine 1-phosphate = D-glucosamine 6-phosphate. Functionally, catalyzes the conversion of glucosamine-6-phosphate to glucosamine-1-phosphate. The chain is Phosphoglucosamine mutase from Chromobacterium violaceum (strain ATCC 12472 / DSM 30191 / JCM 1249 / CCUG 213 / NBRC 12614 / NCIMB 9131 / NCTC 9757 / MK).